Reading from the N-terminus, the 828-residue chain is Periplasmic nitrate reductase (828 aa).

Positions 1–32 form a signal peptide, tat-type signal; sequence MNLSRRDFMKTNAAVAAAAVAGLAIPVKNVEA. Residues 38–94 enclose the 4Fe-4S Mo/W bis-MGD-type domain; the sequence is IKWDKAPCRFCGTGCSVLVGTQNGRVVASQGDPDADVNRGLNCIKGYFLPKIMYGKD. Residues C45, C48, C52, and C80 each coordinate [4Fe-4S] cluster. Mo-bis(molybdopterin guanine dinucleotide) contacts are provided by residues K82, Q149, N174, C178, 211–218, 242–246, 261–263, M372, Q376, N482, 508–509, K531, D558, and 718–727; these read WGSNMAEM, STFEH, QSD, SD, and TGRVLEHWHT. F794 contacts substrate. Mo-bis(molybdopterin guanine dinucleotide)-binding residues include N802 and K819.

It belongs to the prokaryotic molybdopterin-containing oxidoreductase family. NasA/NapA/NarB subfamily. As to quaternary structure, component of the periplasmic nitrate reductase NapAB complex composed of NapA and NapB. Requires [4Fe-4S] cluster as cofactor. Mo-bis(molybdopterin guanine dinucleotide) serves as cofactor. Post-translationally, predicted to be exported by the Tat system. The position of the signal peptide cleavage has not been experimentally proven.

The protein resides in the periplasm. The enzyme catalyses 2 Fe(II)-[cytochrome] + nitrate + 2 H(+) = 2 Fe(III)-[cytochrome] + nitrite + H2O. Its function is as follows. Catalytic subunit of the periplasmic nitrate reductase complex NapAB. Receives electrons from NapB and catalyzes the reduction of nitrate to nitrite. This chain is Periplasmic nitrate reductase, found in Pasteurella multocida (strain Pm70).